We begin with the raw amino-acid sequence, 522 residues long: Cyclic GMP-AMP synthase (522 aa).

Residues 1 to 144 (MQPWHGKAMQ…PPGPWDVPSP (144 aa)) form a disordered region. DNA-binding regions lie at residues 1 to 160 (MQPW…DAAP) and 173 to 215 (KLSR…GSYY). Lysine 7 carries the post-translational modification N6-acetyllysine. Residue serine 13 is modified to Phosphoserine. Lysine 21 carries the post-translational modification N6-acetyllysine. Serine 37 is modified (phosphoserine). An N6-acetyllysine mark is found at lysine 47, lysine 50, lysine 56, lysine 62, and lysine 63. Serine 64 bears the Phosphoserine mark. Positions 64–73 (SAPDTQERPP) are enriched in basic and acidic residues. The segment at 64-75 (SAPDTQERPPVR) is required for association with the cell membrane. Residue threonine 68 is modified to Phosphothreonine. Lysine 82 and lysine 83 each carry N6-acetyllysine. Polar residues predominate over residues 88–97 (AQDTQPSDAT). Position 91 is a phosphothreonine (threonine 91). Phosphoserine is present on residues serine 98, serine 116, and serine 129. The segment covering 98 to 118 (SAPGAEGLEPPAAREPALSRA) has biased composition (low complexity). The tract at residues 120 to 160 (SCRQRGARCSTKPRPPPGPWDVPSPGLPVSAPILVRRDAAP) is required for activation upon DNA viral infection. Residue lysine 131 is modified to N6-lactoyllysine. Positions 132–144 (PRPPPGPWDVPSP) are enriched in pro residues. Residue serine 143 is modified to Phosphoserine. The Nuclear export signal motif lies at 169 to 174 (LEKLKL). Lysine 173 participates in a covalent cross-link: Glycyl lysine isopeptide (Lys-Gly) (interchain with G-Cter in ubiquitin). Position 191 is a polyADP-ribosyl aspartic acid (aspartate 191). The residue at position 210 (asparagine 210) is a (Microbial infection) Deamidated asparagine; by herpes simplex virus 1/HHV-1 UL37. Residue threonine 211 coordinates GTP. Serine 213 bears the Phosphoserine mark. Serine 213 contributes to the ATP binding site. The residue at position 215 (tyrosine 215) is a Phosphotyrosine; by BLK. Mg(2+) contacts are provided by glutamate 225 and aspartate 227. 225 to 227 (EFD) serves as a coordination point for ATP. Aspartate 227 serves as a coordination point for 2',3'-cGAMP. Lysine 231 is covalently cross-linked (Glycyl lysine isopeptide (Lys-Gly) (interchain with G-Cter in SUMO)). Lysine 285 participates in a covalent cross-link: Glycyl lysine isopeptide (Lys-Gly) (interchain with G-Cter in ubiquitin). Glutamate 286 is modified (5-glutamyl polyglutamate). The Nuclear localization signal motif lies at 295-305 (DVIMKRKRGGS). Positions 299 to 302 (KRKR) match the KRKR-loop motif. Residue serine 305 is modified to Phosphoserine; by CDK1 and PKB. 5-glutamyl glutamate is present on glutamate 314. Residue aspartate 319 participates in GTP binding. Mg(2+) is bound at residue aspartate 319. Aspartate 319 lines the 2',3'-cGAMP pocket. The interaction with collided ribosomes stretch occupies residues 341 to 382 (QNWLSAKVRKQLRLKPFYLVPKHAKEGNGFQEETWRLSFSHI). Lysine 347 is covalently cross-linked (Glycyl lysine isopeptide (Lys-Gly) (interchain with G-Cter in SUMO); alternate). A Glycyl lysine isopeptide (Lys-Gly) (interchain with G-Cter in ubiquitin); alternate cross-link involves residue lysine 347. 2',3'-cGAMP contacts are provided by lysine 362 and arginine 376. 376 to 383 (RLSFSHIE) is a binding site for GTP. 380-383 (SHIE) is an ATP binding site. Residue lysine 384 is modified to N6-acetyllysine. Residue lysine 384 forms a Glycyl lysine isopeptide (Lys-Gly) (interchain with G-Cter in SUMO); alternate linkage. Lysine 384 is covalently cross-linked (Glycyl lysine isopeptide (Lys-Gly) (interchain with G-Cter in ubiquitin); alternate). The interval 384–407 (KEILNNHGKSKTCCENKEEKCCRK) is DNA-binding. Asparagine 389 carries the post-translational modification (Microbial infection) Deamidated asparagine; by herpes simplex virus 1/HHV-1 UL37. Histidine 390 contacts Zn(2+). N6-acetyllysine occurs at positions 392 and 394. Lysine 394 is covalently cross-linked (Glycyl lysine isopeptide (Lys-Gly) (interchain with G-Cter in SUMO)). Residues cysteine 396, cysteine 397, and cysteine 404 each coordinate Zn(2+). Residues cysteine 404 and cysteine 405 are each lipidated (S-palmitoyl cysteine). Glycyl lysine isopeptide (Lys-Gly) (interchain with G-Cter in ubiquitin) cross-links involve residues lysine 411, lysine 414, lysine 427, and lysine 428. Lysine 414 carries the post-translational modification N6-acetyllysine. Lysine 414 contacts ATP. The short motif at 427-429 (KKH) is the KKH-loop element. Serine 434 and serine 435 each carry phosphoserine. 435–439 (SYHVK) contributes to the ATP binding site. Residues glutamine 451 and glutamine 454 each carry the (Microbial infection) Deamidated glutamine; by herpes simplex virus 1/HHV-1 UL37 modification. Cysteine 474 is lipidated: S-palmitoyl cysteine. Lysine 479 is covalently cross-linked (Glycyl lysine isopeptide (Lys-Gly) (interchain with G-Cter in SUMO); alternate). Lysine 479 is covalently cross-linked (Glycyl lysine isopeptide (Lys-Gly) (interchain with G-Cter in ubiquitin); alternate). Residue lysine 506 is modified to N6-methyllysine.

It belongs to the mab-21 family. As to quaternary structure, monomer in the absence of DNA. Homodimer in presence of dsDNA: forms a 2:2 dimer with two enzymes binding to two DNA molecules. Interacts with nucleosomes; interaction is mainly mediated via histones H2A and H2B and inactivates the nucleotidyltransferase activity by blocking DNA-binding and subsequent activation. Interacts with PQBP1 (via WW domain). Interacts with TRIM14; this interaction recruits USP14, leading to deubiquitinate and stabilize CGAS and promote type I interferon production. Interacts with ZCCHC3; promoting sensing of dsDNA by CGAS. Interacts (when not monomethylated) with (poly-ADP-ribosylated) PARP1; interaction takes place in the nucleus and prevents the formation of the PARP1-TIMELESS complex. Interacts (when monomethylated) with SGF29; interaction with SGF29 prevents interaction with PARP1. Interacts with PCBP2; preventing the formation of liquid-like droplets in which CGAS is activated. Interacts with IRGM; promoting CGAS degradation. Interacts with DDX41. (Microbial infection) Interacts with herpes virus 8/HHV-8 protein ORF52; this interaction inhibits cGAS enzymatic activity by preventing the formation of liquid-like droplets by CGAS. In terms of assembly, (Microbial infection) Interacts with herpes simplex virus 1 protein UL37; this interaction deaminates CGAS and inhibits its activation. As to quaternary structure, (Microbial infection) Interacts with vaccinia virus protein OPG067; this interaction promotes CGAS proteasomal degradation. (Microbial infection) Interacts with cytomegalovirus protein UL31; this interaction promotes dissociation of DNA from CGAS, thereby inhibiting the enzymatic activity of CGAS. In terms of assembly, (Microbial infection) Interacts with herpes simplex virus 1 tegument protein VP22 (UL49); this interaction inhibits cGAS enzymatic activity by preventing the formation of liquid-like droplets by CGAS. As to quaternary structure, (Microbial infection) Interacts with herpesvirus 3 tegument protein VP22 (ORF9); this interaction inhibits cGAS enzymatic activity by preventing the formation of liquid-like droplets by CGAS. (Microbial infection) Interacts with human cytomegalovirus proteins UL42 and UL83; these interactions result in the inhibition of cGAS-STING signaling. Requires Mg(2+) as cofactor. It depends on Mn(2+) as a cofactor. The cofactor is Zn(2+). In terms of processing, the N-terminal disordered part (1-160) is phosphorylated by AURKB during the G2-M transition, blocking CGAS liquid phase separation and preventing activation. Phosphorylation at Tyr-215 by BLK promotes cytosolic retention. Localizes into the nucleus following dephosphorylation at Tyr-215. Phosphorylation at Ser-435 activates the nucleotidyltransferase activity. Dephosphorylation at Ser-435 by PPP6C impairs its ability to bind GTP, thereby inactivating it. Phosphorylation at Thr-68 and Ser-213 by PRKDC inhibits its cyclic GMP-AMP synthase activity by impairing homodimerization and activation. Phosphorylation at Ser-305 by AKT (AKT1, AKT2 or AKT3) suppresses the nucleotidyltransferase activity. Phosphorylation at Ser-305 by CDK1 during mitosis leads to its inhibition, thereby preventing CGAS activation by self-DNA during mitosis. Dephosphorylated at Ser-305 by protein phosphatase PP1 upon mitotic exit. Ubiquitinated at Lys-414 via 'Lys-48'-linked polyubiquitin chains, leading to its SQSTM1-mediated autophagic degradation. Interaction with TRIM14 promotes recruitment of USP14, leading to deubiquitinate Lys-414 and stabilize CGAS. Ubiquitinated at Lys-173 and Lys-384 by RNF185 via 'Lys-27'-linked polyubiquitination, promoting CGAS cyclic GMP-AMP synthase activity. Monoubiquitination at Lys-347 by TRIM56 promotes oligomerization and subsequent activation. Monoubiquitination by TRIM41 promotes CGAS activation. Ubiquitination at Lys-285 and Lys-479 via 'Lys-48'-linked polyubiquitination promotes its degradation. Deubiquitination at Lys-285 by USP29 promotes its stabilization. Deubiquitinated by USP27X, promoting its stabilization. Ubiquitinated at Lys-411 via 'Lys-63'-linked polyubiquitin chains by MARCHF8, leading to the inhibition of its DNA binding ability. In cycling cells, nucleosome-bound CGAS is ubiquitinated at Lys-427 and Lys-428 via 'Lys-48'-linked polyubiquitin chains by the ECS(SPSB3) complex, leading to its degradation: ubiquitination and degradation of nuclear CGAS during G1 and G2 phases is required to promote low intranuclear CGAS abundance before the next mitotic cycle. Post-translationally, sumoylated at Lys-231 and Lys-479 by TRIM38 in uninfected cells and during the early phase of viral infection, promoting its stability by preventing ubiquitination at Lys-285 and Lys-479, and subsequent degradation. Desumoylated by SENP2 during the late phase of viral infection. Sumoylation at Lys-347, Lys-384 and Lys-394 prevents DNA-binding, oligomerization and nucleotidyltransferase activity. Desumoylation at Lys-347, Lys-384 and Lys-394 by SENP7 relieves inhibition and activates CGAS. In terms of processing, polyglutamylated by TTLL6 at Glu-286, leading to impair DNA-binding activity. Monoglutamylated at Glu-314 by TTLL4, leading to impair the nucleotidyltransferase activity. Deglutamylated by AGBL5/CCP5 and AGBL6/CCP6. Acetylation at Lys-384, Lys-394 and Lys-414 inhibits the cyclic GMP-AMP synthase activity. Deacetylated upon cytosolic DNA challenge such as viral infections. Acetylation can be mediated by aspirin (acetylsalicylate) drug, which directly acetylates CGAS. Acetylation by aspirin efficiently inhibits CGAS-mediated immune responses and is able to suppress self-DNA-induced autoimmunity. Acetylation at Lys-47, Lys-56, Lys-62 and Lys-83 by KAT5 increases the cyclic GMP-AMP synthase activity by promoting DNA-binding and subsequent activation. Post-translationally, proteolytically cleaved by apoptotic caspases during apoptosis, leading to its inactivation. The damage of the nucleus and the mitochondria during apoptosis leads to leakage of nuclear and mitochondrial DNA, which activate CGAS: cleavage and inactivation during apoptosis in required to prevent cytokine overproduction. Cleaved by CASP3 at Asp-319 during virus-induced apoptosis, thereby inactivating it and preventing cytokine overproduction. Cleaved by CASP1 at Asp-140 and Asp-157 upon DNA virus infection; the cleavage impairs cGAMP production. Also cleaved by the pyroptotic CASP4 and CASP5 during non-canonical inflammasome activation; they don't cut at the same sites than CASP1. In terms of processing, degraded via selective autophagy following interaction with IRGM. IRGM promotes CGAS recruitment to autophagosome membranes, promoting its SQSTM1/p62-dependent autophagic degradation. Poly-ADP-ribosylation at Asp-191 by PARP1 impairs DNA-binding, thereby preventing the cyclic GMP-AMP synthase activity. Post-translationally, palmitoylation at Cys-474 by ZDHHC18 impairs DNA-binding, thereby preventing the cyclic GMP-AMP synthase activity. Palmitoylation at Cys-404 and Cys-405 by ZDHHC9 promotes homodimerization and cyclic GMP-AMP synthase activity. Depalmitoylation at Cys-404 and Cys-405 by LYPLAL1 impairs homodimerization and cyclic GMP-AMP synthase activity. In terms of processing, monomethylated at Lys-506 by SETD7. Monomethylation promotes interaction with SGF29, preventing interaction between PARP1 nad SGF29. Demethylation by RIOX1 promotes interaction with PARP1, followed by PARP1 inactivation. Lactylation by AARS2 prevents ability to undergo liquid-liquid phase separation (LLPS), thereby inhibiting CGAS activation. Post-translationally, (Microbial infection) Deamidated on 'Asn-210' by herpes simplex virus 1 protein UL37. This modification significantly reduces CGAS-dependent cGAMP production and innate immune signaling induced by dsDNA. In terms of processing, (Microbial infection) Degraded by an autophagy-mediated mechanism in presence of Chikungunya virus capsid protein. In terms of tissue distribution, expressed in the monocytic cell line THP1.

The protein resides in the nucleus. The protein localises to the chromosome. It is found in the cell membrane. It localises to the cytoplasm. Its subcellular location is the cytosol. It catalyses the reaction GTP + ATP = 2',3'-cGAMP + 2 diphosphate. It carries out the reaction GTP + ATP = pppGp(2'-5')A + diphosphate. The catalysed reaction is pppGp(2'-5')A = 2',3'-cGAMP + diphosphate. The enzyme activity is strongly increased by double-stranded DNA (dsDNA), but not by single-stranded DNA or RNA. DNA-binding induces the formation of liquid-like droplets in which CGAS is activated. Liquid-like droplets also create a selective environment that restricts entry of negative regulators, such as TREX1 or BANF1/BAF, allowing sensing of DNA. A number of mechanisms exist to restrict its activity toward self-DNA. The nucleotidyltransferase activity is inhibited in the nucleus via its association with nucleosomes: interacts with the acidic patch of histones H2A and H2B, thereby blocking DNA-binding and subsequent activation. CGAS is also inactive when associated with mitotic chromatin. Chromatin-bound CGAS cannot be activated by exogenous DNA in mitotic cells: phosphorylation of the N-terminal disordered part by AURKB during the G2-M transition blocks CGAS liquid phase separation and activation. Activity toward self-DNA is inhibited by BANF1/BAF upon acute loss of nuclear membrane integrity: BANF1/BAF acts by outcompeting CGAS for DNA-binding, thereby preventing CGAS activation. DNA-induced activation at micronuclei is also limited by TREX1, which degrades micronuclear DNA upon nuclear envelope rupture, thereby preventing CGAS activation. CGAS can be released from nucleosomes and activated by MRE11 component of the MRN complex, which displaces CGAS from acidic-patch-mediated sequestration. Acetylation at Lys-384, Lys-394 and Lys-414 inhibits the cyclic GMP-AMP synthase activity. Inhibited by aspirin (acetylsalicylate) drug, which acetylates CGAS. Acetylation by KAT5 increases the cyclic GMP-AMP synthase activity by promoting DNA-binding and subsequent activation. Phosphorylation at Ser-305 suppresses the nucleotidyltransferase activity. Phosphorylation at Ser-435 promotes the cyclic GMP-AMP synthase activity. Phosphorylation at Thr-68 and Ser-213 inhibits its cyclic GMP-AMP synthase activity. Ubiquitination at Lys-173 and Lys-384 via 'Lys-27'-linked polyubiquitination enhances the cyclic GMP-AMP synthase activity. Monoubiquitination at Lys-347 promotes oligomerization and subsequent activation. Sumoylation at Lys-347, Lys-384 and Lys-394 prevents DNA-binding, oligomerization and nucleotidyltransferase activity. The enzyme activity is impaired by the cleavage at Asp-140 and Asp-157 produced by CASP1. In addition to DNA, also activated by collided ribosomes upon translation stress: specifically binds collided ribosomes, promoting its activation and triggering type-I interferon production. Strongly inhibited by compound PF-06928215, which is specific for human protein. Inhibited by small-molecule inhibitors with a pyridoindole tricyclic core G108, G140 and G150. Its activity is regulated as follows. (Microbial infection) Nucleotidyltransferase activity is inhibited by different herpesvirus tegument proteins (Herpes simplex virus 1 tegument protein VP22, herpes virus 8 protein ORF52 and herpesvirus 3 tegument protein VP22/ORF9). Viral tegument proteins act by disrupting liquid-like droplets in which CGAS is activated, thereby preventing CGAS activity. Functionally, nucleotidyltransferase that catalyzes the formation of cyclic GMP-AMP (2',3'-cGAMP) from ATP and GTP and plays a key role in innate immunity. Catalysis involves both the formation of a 2',5' phosphodiester linkage at the GpA step and the formation of a 3',5' phosphodiester linkage at the ApG step, producing c[G(2',5')pA(3',5')p]. Acts as a key DNA sensor: directly binds double-stranded DNA (dsDNA), inducing the formation of liquid-like droplets in which CGAS is activated, leading to synthesis of 2',3'-cGAMP, a second messenger that binds to and activates STING1, thereby triggering type-I interferon production. Preferentially recognizes and binds curved long dsDNAs of a minimal length of 40 bp. Acts as a key foreign DNA sensor, the presence of double-stranded DNA (dsDNA) in the cytoplasm being a danger signal that triggers the immune responses. Has antiviral activity by sensing the presence of dsDNA from DNA viruses in the cytoplasm. Also acts as an innate immune sensor of infection by retroviruses, such as HIV-2, by detecting the presence of reverse-transcribed DNA in the cytosol. In contrast, HIV-1 is poorly sensed by CGAS, due to its capsid that cloaks viral DNA from CGAS detection. Detection of retroviral reverse-transcribed DNA in the cytosol may be indirect and be mediated via interaction with PQBP1, which directly binds reverse-transcribed retroviral DNA. Also detects the presence of DNA from bacteria, such as M.tuberculosis. 2',3'-cGAMP can be transferred from producing cells to neighboring cells through gap junctions, leading to promote STING1 activation and convey immune response to connecting cells. 2',3'-cGAMP can also be transferred between cells by virtue of packaging within viral particles contributing to IFN-induction in newly infected cells in a cGAS-independent but STING1-dependent manner. Also senses the presence of neutrophil extracellular traps (NETs) that are translocated to the cytosol following phagocytosis, leading to synthesis of 2',3'-cGAMP. In addition to foreign DNA, can also be activated by endogenous nuclear or mitochondrial DNA. When self-DNA leaks into the cytosol during cellular stress (such as mitochondrial stress, SARS-CoV-2 infection causing severe COVID-19 disease, DNA damage, mitotic arrest or senescence), or is present in form of cytosolic micronuclei, CGAS is activated leading to a state of sterile inflammation. Acts as a regulator of cellular senescence by binding to cytosolic chromatin fragments that are present in senescent cells, leading to trigger type-I interferon production via STING1 and promote cellular senescence. Also involved in the inflammatory response to genome instability and double-stranded DNA breaks: acts by localizing to micronuclei arising from genome instability. Micronuclei, which are frequently found in cancer cells, consist of chromatin surrounded by their own nuclear membrane: following breakdown of the micronuclear envelope, a process associated with chromothripsis, CGAS binds self-DNA exposed to the cytosol, leading to 2',3'-cGAMP synthesis and subsequent activation of STING1 and type-I interferon production. Activated in response to prolonged mitotic arrest, promoting mitotic cell death. In a healthy cell, CGAS is however kept inactive even in cellular events that directly expose it to self-DNA, such as mitosis, when cGAS associates with chromatin directly after nuclear envelope breakdown or remains in the form of postmitotic persistent nuclear cGAS pools bound to chromatin. Nuclear CGAS is inactivated by chromatin via direct interaction with nucleosomes, which block CGAS from DNA binding and thus prevent CGAS-induced autoimmunity. Also acts as a suppressor of DNA repair in response to DNA damage: inhibits homologous recombination repair by interacting with PARP1, the CGAS-PARP1 interaction leading to impede the formation of the PARP1-TIMELESS complex. In addition to DNA, also sense translation stress: in response to translation stress, translocates to the cytosol and associates with collided ribosomes, promoting its activation and triggering type-I interferon production. In contrast to other mammals, human CGAS displays species-specific mechanisms of DNA recognition and produces less 2',3'-cGAMP, allowing a more fine-tuned response to pathogens. The sequence is that of Cyclic GMP-AMP synthase from Homo sapiens (Human).